A 1255-amino-acid chain; its full sequence is Structural polyprotein (1255 aa).

The tract at residues 1-33 (MFPFQPMYPMQPMPYRNPFAAPRRPWFPRTDPF) is necessary for nucleocapsid assembly and virus assembly. Positions 33-68 (FLAMQVQELTRSMANLTFKQRREAPPEGPPAKKPKR) are host transcription inhibition. The Supraphysiological nuclear export signal signature appears at 41 to 48 (LTRSMANL). The interval 44–119 (SMANLTFKQR…KKPGKRQRMV (76 aa)) is disordered. A glycan (N-linked (GlcNAc...) asparagine; by host) is linked at N47. A Nuclear localization signal motif is present at residues 64–68 (KKPKR). Residues 80-92 (GKKKKNQGKKKAK) are compositionally biased toward basic residues. Residues 91-127 (AKTGPPNPKAQNGNKKKTNKKPGKRQRMVMKLESDKT) form a binding to the viral RNA region. Phosphothreonine occurs at positions 93 and 108. Residues 104-118 (NKKKTNKKPGKRQRM) are compositionally biased toward basic residues. The tract at residues 112–126 (PGKRQRMVMKLESDK) is ribosome-binding. A Phosphoserine modification is found at S124. The region spanning 126–275 (KTFPIMLEGK…KYTPENCEQW (150 aa)) is the Peptidase S3 domain. At T127 the chain carries Phosphothreonine. H152 functions as the Charge relay system in the catalytic mechanism. Residues 168 to 173 (KKASKY) are interaction with spike glycoprotein E2. Catalysis depends on charge relay system residues D174 and S226. The interaction with spike glycoprotein E2 stretch occupies residues 260–264 (EKGVT). A functions as an uncleaved signal peptide for the precursor of protein E3/E2 region spans residues 276-287 (SLVTTMCLLANV). At 276–701 (SLVTTMCLLA…HYYHRYPMST (426 aa)) the chain is on the extracellular side. 7 disulfide bridges follow: C282–C291, C353–C457, C356–C361, C424–C438, C485–C600, C534–C560, and C536–C554. N-linked (GlcNAc...) asparagine; by host glycosylation is present at N286. The N-linked (GlcNAc...) asparagine; by host glycan is linked to N652. Residues 702 to 722 (ILGLSICAAIVTVSIAASTWL) traverse the membrane as a helical segment. The Cytoplasmic portion of the chain corresponds to 723–757 (LCKSRVSCLTPYRLTPNARMPLCLAVLCCARTARA). Residues 725 to 729 (KSRVS) form an interaction with the capsid protein region. 3 S-palmitoyl cysteine; by host lipidation sites follow: C730, C750, and C751. A transient transmembrane before p62-6K protein processing region spans residues 730-750 (CLTPYRLTPNARMPLCLAVLC). A disulfide bond links C730 and C751. The Extracellular portion of the chain corresponds to 758-772 (ETTWESLDHLWNNNQ). Residues 773–793 (QMFWIQLLIPLAALIVVTRLL) form a helical membrane-spanning segment. Residue R794 is a topological domain, cytoplasmic. The chain crosses the membrane as a helical span at residues 795–815 (CVCCVVPFLVVAGAAGAGAYE). Residues 816-1225 (HATTMPSQAG…SKTAWTWLTS (410 aa)) lie on the Extracellular side of the membrane. Cystine bridges form between C862-C927, C875-C907, C876-C909, and C881-C891. The tract at residues 897–914 (VYPFMWGGAYCFCDTENT) is E1 fusion peptide loop. 2 N-linked (GlcNAc...) asparagine; by host glycosylation sites follow: N947 and N1083. Cystine bridges form between C1072–C1084, C1114–C1189, C1119–C1193, and C1141–C1183. A helical transmembrane segment spans residues 1226–1246 (LLGGSAVIIIIGLVLATIVAM). Over 1247–1255 (YVLTNQKHN) the chain is Cytoplasmic.

As to quaternary structure, homodimer. Homomultimer. Interacts with host karyopherin KPNA4; this interaction allows the nuclear import of the viral capsid protein. Interacts with spike glycoprotein E2. Interacts with host IRAK1; the interaction leads to inhibition of IRAK1-dependent signaling. Part of a tetrameric complex composed of host CRM1, host importin alpha/beta dimer and the viral capsid; this complex blocks the receptor-mediated transport through the nuclear pore. Interacts with host phosphatase PPP1CA; this interaction dephosphorylates the capsid protein, which increases its ability to bind to the viral genome. In terms of assembly, the precursor of protein E3/E2 and E1 form a heterodimer shortly after synthesis. Interacts with spike glycoprotein E2. The precursor of protein E3/E2 and E1 form a heterodimer shortly after synthesis. Processing of the precursor of protein E3/E2 into E2 and E3 results in a heterodimer of the spike glycoproteins E2 and E1. Spike at virion surface are constituted of three E2-E1 heterodimers. After target cell attachment and endocytosis, E1 change conformation to form homotrimers. Interacts with 6K protein. Interacts with host LDLRAD3; this interaction mediates viral entry to the host cell. As to quaternary structure, interacts with spike glycoprotein E1. Processing of the precursor of protein E3/E2 into E2 and E3 results in a heterodimer of the spike glycoproteins E2 and E1. Spike at virion surface are constituted of a trimer of E2-E1 heterodimers. Interacts with 6K protein. Interacts with host LDLRAD3; this interaction mediates viral entry to the host cell. In terms of assembly, oligomer. Interacts with spike glycoprotein E1. Interacts with spike glycoprotein E2. Structural polyprotein: Specific enzymatic cleavages in vivo yield mature proteins. Capsid protein is auto-cleaved during polyprotein translation, unmasking a signal peptide at the N-terminus of the precursor of E3/E2. The remaining polyprotein is then targeted to the host endoplasmic reticulum, where host signal peptidase cleaves it into pE2, 6K and E1 proteins. pE2 is further processed to mature E3 and E2 by host furin in trans-Golgi vesicle. In terms of processing, phosphorylated on serine and threonine residues. Post-translationally, palmitoylated via thioester bonds. These palmitoylations may induce disruption of the C-terminus transmembrane. This would result in the reorientation of E2 C-terminus from lumenal to cytoplasmic side. N-glycosylated. In terms of processing, palmitoylated via thioester bonds.

Its subcellular location is the virion. It is found in the host cytoplasm. It localises to the host cell membrane. The protein localises to the host nucleus. The protein resides in the virion membrane. Its subcellular location is the host Golgi apparatus. It is found in the host trans-Golgi network. It localises to the host endoplasmic reticulum. It catalyses the reaction Autocatalytic release of the core protein from the N-terminus of the togavirus structural polyprotein by hydrolysis of a -Trp-|-Ser- bond.. Its function is as follows. Forms an icosahedral capsid with a T=4 symmetry composed of 240 copies of the capsid protein surrounded by a lipid membrane through which penetrate 80 spikes composed of trimers of E1-E2 heterodimers. The capsid protein binds to the viral RNA genome at a site adjacent to a ribosome binding site for viral genome translation following genome release. Possesses a protease activity that results in its autocatalytic cleavage from the nascent structural protein. Following its self-cleavage, the capsid protein transiently associates with ribosomes, and within several minutes the protein binds to viral RNA and rapidly assembles into icosahedric core particles. The resulting nucleocapsid eventually associates with the cytoplasmic domain of the spike glycoprotein E2 at the cell membrane, leading to budding and formation of mature virions. In case of infection, new virions attach to target cells and after clathrin-mediated endocytosis their membrane fuses with the host endosomal membrane. This leads to the release of the nucleocapsid into the cytoplasm, followed by an uncoating event necessary for the genomic RNA to become accessible. The uncoating might be triggered by the interaction of capsid proteins with ribosomes. Binding of ribosomes would release the genomic RNA since the same region is genomic RNA-binding and ribosome-binding. Specifically inhibits interleukin-1 receptor-associated kinase 1/IRAK1-dependent signaling during viral entry, representing a means by which the alphaviruses may evade innate immune detection and activation prior to viral gene expression. Inhibits host transcription. Forms a tetrameric complex with XPO1/CRM1 and the nuclear import receptor importin. This complex blocks the central channel of host nuclear pores thereby inhibiting the receptor-mediated nuclear transport and thus the host mRNA and rRNA transcription. The inhibition of transcription is linked to a cytopathic effect on the host cell. In terms of biological role, provides the signal sequence for the translocation of the precursor of protein E3/E2 to the host endoplasmic reticulum. Furin-cleaved E3 remains associated with spike glycoprotein E1 and mediates pH protection of the latter during the transport via the secretory pathway. After virion release from the host cell, the assembly protein E3 is gradually released in the extracellular space. Plays a role in viral attachment to target host cell, by binding to the cell receptor LDLRAD3. Synthesized as a p62 precursor which is processed by furin at the cell membrane just before virion budding, giving rise to E2-E1 heterodimer. The p62-E1 heterodimer is stable, whereas E2-E1 is unstable and dissociate at low pH. p62 is processed at the last step, presumably to avoid E1 fusion activation before its final export to cell surface. E2 C-terminus contains a transitory transmembrane that would be disrupted by palmitoylation, resulting in reorientation of the C-terminal tail from lumenal to cytoplasmic side. This step is critical since E2 C-terminus is involved in budding by interacting with capsid proteins. This release of E2 C-terminus in cytoplasm occurs lately in protein export, and precludes premature assembly of particles at the endoplasmic reticulum membrane. Functionally, acts as a viroporin that participates in virus glycoprotein processing and transport to the plasma membrane, cell permeabilization and budding of viral particles. Disrupts the calcium homeostasis of the cell, probably at the endoplasmic reticulum level. This leads to cytoplasmic calcium elevation. Because of its lipophilic properties, the 6K protein is postulated to influence the selection of lipids that interact with the transmembrane domains of the glycoproteins, which, in turn, affects the deformability of the bilayer required for the extreme curvature that occurs as budding proceeds. Present in low amount in virions, about 3% compared to viral glycoproteins. Its function is as follows. Class II viral fusion protein. Fusion activity is inactive as long as E1 is bound to E2 in mature virion. After virus attachment to cell receptor LDLRAD3 and endocytosis, acidification of the endosome induce dissociation of E1/E2 heterodimer and concomitant trimerization of the E1 subunits. This E1 trimer is fusion active, and promotes release of viral nucleocapsid in cytoplasm after endosome and viral membrane fusion. Efficient fusion requires the presence of cholesterol and sphingolipid in the target membrane. This Venezuelan equine encephalitis virus (strain 3880) (VEEV) protein is Structural polyprotein.